Reading from the N-terminus, the 218-residue chain is Histone H1.1 (218 aa).

Positions 1–42 are disordered; sequence MSEVALPAPAASTSPEKPSAGKKAKKPAKAAAAAKKKPAGPS. S2 bears the N-acetylserine mark. A phosphoserine mark is found at S2 and S12. Residue K17 is modified to N6-acetyllysine. Residues 20–38 show a composition bias toward basic residues; it reads AGKKAKKPAKAAAAAKKKP. K37 is modified (N6-(beta-hydroxybutyryl)lysine). The H15 domain occupies 39–112; that stretch reads AGPSVSELIV…GASGSFKLNK (74 aa). Position 44 is a phosphoserine (S44). Residue K55 is modified to N6-(beta-hydroxybutyryl)lysine. Position 57 is a citrulline (R57). K67 is subject to N6-(beta-hydroxybutyryl)lysine. At K78 the chain carries N6-acetyllysine. K88 is modified (N6-(beta-hydroxybutyryl)lysine). An N6-(beta-hydroxybutyryl)lysine; alternate modification is found at K93. Residue K93 is modified to N6-acetyllysine; alternate. At S107 the chain carries Phosphoserine; by PKC. Position 109 is an N6-(beta-hydroxybutyryl)lysine (K109). Residues 116–218 are disordered; the sequence is SVDAKPTATK…KPKKAAPKKK (103 aa). The span at 119-149 shows a compositional bias: low complexity; the sequence is AKPTATKVATKTKVTSASKKPKKASGAAAAK. An N6-acetyllysine modification is found at K125. Basic residues-rich tracts occupy residues 150-183 and 190-218; these read KSVKTPKKARKSVLTKKSSKSPKKPKAVKPKKVA and KAVKPKGAKVKVTKPKTAAKPKKAAPKKK. T206 bears the Phosphothreonine mark.

This sequence belongs to the histone H1/H5 family. In terms of assembly, interacts with DFFB. H1 histones are progressively phosphorylated during the cell cycle, becoming maximally phosphorylated during late G2 phase and M phase, and being dephosphorylated sharply thereafter. Post-translationally, citrullination at Arg-57 (H1R54ci) by PADI4 takes place within the DNA-binding site of H1 and results in its displacement from chromatin and global chromatin decondensation, thereby promoting pluripotency and stem cell maintenance.

It is found in the nucleus. Its subcellular location is the chromosome. Functionally, H1 histones bind to linker DNA between nucleosomes forming the macromolecular structure known as the chromatin fiber. H1 histones are necessary for the condensation of nucleosome chains into higher-order structured fibers. Also acts as a regulator of individual gene transcription through chromatin remodeling. This chain is Histone H1.1, found in Bos taurus (Bovine).